The chain runs to 207 residues: Lipid A acyltransferase PagP (207 aa).

A signal peptide spans 1-24; sequence MKFDLTTAYTLSIPLLASSGTVLA. Residues H79, D122, and S123 contribute to the active site.

Belongs to the lipid A palmitoyltransferase family. As to quaternary structure, homodimer.

It localises to the cell outer membrane. It carries out the reaction a lipid A + a 1,2-diacyl-sn-glycero-3-phosphocholine = a hepta-acyl lipid A + a 2-acyl-sn-glycero-3-phosphocholine. The catalysed reaction is a lipid IVA + a 1,2-diacyl-sn-glycero-3-phosphocholine = a lipid IVB + a 2-acyl-sn-glycero-3-phosphocholine. It catalyses the reaction a lipid IIA + a 1,2-diacyl-sn-glycero-3-phosphocholine = a lipid IIB + a 2-acyl-sn-glycero-3-phosphocholine. Functionally, transfers a fatty acid residue from the sn-1 position of a phospholipid to the N-linked hydroxyfatty acid chain on the proximal unit of lipid A or its precursors. This Photorhabdus asymbiotica subsp. asymbiotica (strain ATCC 43949 / 3105-77) (Xenorhabdus luminescens (strain 2)) protein is Lipid A acyltransferase PagP.